We begin with the raw amino-acid sequence, 278 residues long: DNA adenine methylase (278 aa).

S-adenosyl-L-methionine contacts are provided by Trp-10, Lys-14, Asp-54, and Asp-181.

It belongs to the N(4)/N(6)-methyltransferase family.

It catalyses the reaction a 2'-deoxyadenosine in DNA + S-adenosyl-L-methionine = an N(6)-methyl-2'-deoxyadenosine in DNA + S-adenosyl-L-homocysteine + H(+). An alpha subtype methylase, recognizes the double-stranded sequence 5'-GATC-3' and methylates A-2. May be involved in methyl-directed DNA mismatch repair, initiation of chromosome replication and gene expression. This chain is DNA adenine methylase (dam), found in Salmonella typhi.